Here is a 347-residue protein sequence, read N- to C-terminus: Protein RecA (347 aa).

70 to 77 (GPESSGKT) provides a ligand contact to ATP.

Belongs to the RecA family.

It is found in the cytoplasm. Can catalyze the hydrolysis of ATP in the presence of single-stranded DNA, the ATP-dependent uptake of single-stranded DNA by duplex DNA, and the ATP-dependent hybridization of homologous single-stranded DNAs. It interacts with LexA causing its activation and leading to its autocatalytic cleavage. In Ruegeria pomeroyi (strain ATCC 700808 / DSM 15171 / DSS-3) (Silicibacter pomeroyi), this protein is Protein RecA.